A 432-amino-acid polypeptide reads, in one-letter code: Hexuronate transporter (432 aa).

Residues 1–31 (MRKIKGLRWYMIALVTLGTVLGYLTRNTVAA) form the signal peptide. Residues 33-48 (APTLMEELNISTQQYS) are Periplasmic-facing. Residues 49–69 (YIIAAYSAAYTVMQPVAGYVL) traverse the membrane as a helical segment. Residues 70-75 (DVLGTK) are Cytoplasmic-facing. The helical transmembrane segment at 76–96 (IGYAMFAVLWAVFCGATALAG) threads the bilayer. Over 97–99 (SWG) the chain is Periplasmic. The helical transmembrane segment at 100–120 (GLAVARGAVGAAEAAMIPAGL) threads the bilayer. Residues 121-138 (KASSEWFPAKERSIAVGY) are Cytoplasmic-facing. A helical transmembrane segment spans residues 139 to 159 (FNVGSSIGAMIAPPLVVWAIV). At 160 to 164 (MHSWQ) the chain is on the periplasmic side. A helical transmembrane segment spans residues 165–185 (MAFIISGALSFIWAMAWLIFY). Residues 186-236 (KHPRDQKHLTDEERDYIINGQEAQHQVSTAKKMSVGQILRNRQFWGIALPR) lie on the Cytoplasmic side of the membrane. A helical membrane pass occupies residues 237–257 (FLAEPAWGTFNAWIPLFMFKV). The Periplasmic portion of the chain corresponds to 258-264 (YGFNLKE). The helical transmembrane segment at 265 to 285 (IAMFAWMPMLFADLGCILGGY) threads the bilayer. Residues 286–293 (LPPLFQRW) lie on the Cytoplasmic side of the membrane. Residues 294-314 (FGVNLIVSRKMVVTLGAVLMI) form a helical membrane-spanning segment. Residues 315–317 (GPG) are Periplasmic-facing. The chain crosses the membrane as a helical span at residues 318 to 338 (MIGLFTNPYVAIMLLCIGGFA). Residues 339–369 (HQALSGALITLSSDVFGRNEVATANGLTGMS) lie on the Cytoplasmic side of the membrane. The chain crosses the membrane as a helical span at residues 370 to 390 (AWLASTLFALVVGALADTIGF). Residue S391 is a topological domain, periplasmic. Residues 392–412 (PLFAVLAVFDLLGALVIWTVL) form a helical membrane-spanning segment. At 413 to 432 (QNKPAIEVAQETHNDPAPQH) the chain is on the cytoplasmic side.

The protein belongs to the major facilitator superfamily. Phthalate permease family.

It localises to the cell inner membrane. It catalyses the reaction aldehydo-D-glucuronate(in) + H(+)(in) = aldehydo-D-glucuronate(out) + H(+)(out). The catalysed reaction is aldehydo-D-galacturonate(out) + H(+)(out) = aldehydo-D-galacturonate(in) + H(+)(in). Its function is as follows. Transport of aldohexuronates such as D-glucuronate and D-galacturonate. This Escherichia coli O157:H7 protein is Hexuronate transporter (exuT).